The sequence spans 375 residues: Mitogen-activated protein kinase 4a (375 aa).

The Protein kinase domain occupies 39 to 325 (KPPLRPIGRG…VEAALAHPYL (287 aa)). ATP is bound by residues 45–53 (IGRGAYGIV) and lysine 68. Residue aspartate 165 is the Proton acceptor of the active site. The residue at position 197 (threonine 197) is a Phosphothreonine. Positions 197-199 (TEY) match the TXY motif. Phosphotyrosine is present on tyrosine 199.

Belongs to the protein kinase superfamily. CMGC Ser/Thr protein kinase family. MAP kinase subfamily. It depends on Mg(2+) as a cofactor. In terms of processing, dually phosphorylated on Thr-197 and Tyr-199, which activates the enzyme. Phosphorylated in response to pathogen-associated molecular pattern (PAMP) chitin and in response to necrotrophic fungus B.cinerea spores. Not phosphorylated in response to osmotic stress. In terms of tissue distribution, expressed strongly in the apical cells of caulonemal air filaments and rhizoids in fully developed plants and less strongly, but readily detectable in filamentous protonemal tissue at the edge of the plant consisting of both chloronema and caulonema. When filamentous growth of protonema is promoted, the expression is strongest in newly formed apical tip cells of protonemal tissue.

It localises to the cytoplasm. It is found in the nucleus. It catalyses the reaction L-seryl-[protein] + ATP = O-phospho-L-seryl-[protein] + ADP + H(+). The catalysed reaction is L-threonyl-[protein] + ATP = O-phospho-L-threonyl-[protein] + ADP + H(+). With respect to regulation, activated by threonine and tyrosine phosphorylation. Activated in response to bacterial and fungal pathogen-associated molecular patterns (PAMPs) including chitin, chitosan and peptidyl glycans (PGNs). Activation in response to chitin requires the CERK1, MEKK1a/b, MKK1a/b/c and MPK4a/b signaling pathway. Activated in response to necrotrophic fungus B.cinerea spores. Not activated in response to osmotic stress. In terms of biological role, the CERK1, MEKK1a/b, MKK1a/b/c and MPK4a/b proteins are involved in pathogen defense. The pathway induces rapid growth inhibition, cell wall depositions and accumulation of defense-related transcripts. This protein is required for innate immunity triggered by pathogen-associated molecular patterns (PAMPs). Involved in resistance to necrotrophic fungi B.cinerea and A.brassicicola. Involved in the transduction of signals from chitosan perception to the activation of defense genes. This Physcomitrium patens (Spreading-leaved earth moss) protein is Mitogen-activated protein kinase 4a (MPK4a).